A 339-amino-acid chain; its full sequence is Phenylalanine--tRNA ligase alpha subunit (339 aa).

Glutamate 254 contributes to the Mg(2+) binding site.

The protein belongs to the class-II aminoacyl-tRNA synthetase family. Phe-tRNA synthetase alpha subunit type 1 subfamily. In terms of assembly, tetramer of two alpha and two beta subunits. Mg(2+) serves as cofactor.

Its subcellular location is the cytoplasm. It catalyses the reaction tRNA(Phe) + L-phenylalanine + ATP = L-phenylalanyl-tRNA(Phe) + AMP + diphosphate + H(+). This chain is Phenylalanine--tRNA ligase alpha subunit, found in Lachnoclostridium phytofermentans (strain ATCC 700394 / DSM 18823 / ISDg) (Clostridium phytofermentans).